An 872-amino-acid polypeptide reads, in one-letter code: Alanine--tRNA ligase (872 aa).

The Zn(2+) site is built by His-567, His-571, Cys-669, and His-673.

This sequence belongs to the class-II aminoacyl-tRNA synthetase family. Zn(2+) is required as a cofactor.

It is found in the cytoplasm. The enzyme catalyses tRNA(Ala) + L-alanine + ATP = L-alanyl-tRNA(Ala) + AMP + diphosphate. Functionally, catalyzes the attachment of alanine to tRNA(Ala) in a two-step reaction: alanine is first activated by ATP to form Ala-AMP and then transferred to the acceptor end of tRNA(Ala). Also edits incorrectly charged Ser-tRNA(Ala) and Gly-tRNA(Ala) via its editing domain. This is Alanine--tRNA ligase from Streptococcus pneumoniae serotype 4 (strain ATCC BAA-334 / TIGR4).